The sequence spans 899 residues: CNK3/IPCEF1 fusion protein (899 aa).

The region spanning 7–72 (WSPKQVVDWT…LEAVDLLCAL (66 aa)) is the SAM domain. The CRIC domain maps to 80–174 (NMKNLVLKLR…TTVQKDCFVA (95 aa)). Residues 211-293 (EVHLPNIKPG…GVVLLLKKRP (83 aa)) enclose the PDZ domain. Disordered regions lie at residues 309–334 (WKPPLVQTSPPPATTQSPESTMDTSL) and 347–390 (PPPP…FLDQ). The DUF1170 domain maps to 332 to 457 (TSLKKEKSAI…ARPRGHGRKA (126 aa)). A Phosphoserine modification is found at S383. Residues 503 to 602 (HADCQGWLYK…WLNKLGSAVI (100 aa)) form the PH domain. 3 disordered regions span residues 605–687 (ESTT…PDTV), 735–770 (LSSDDTSSLSSNHDHLTVPDKPAGSKIMDKEETKVS), and 868–899 (QQQRASPAPDDTDDTPQELKKSPSSPSVENSI). Acidic residues predominate over residues 613–624 (CYSESEQEDPEI). The span at 634 to 662 (ASQTQSLTAQQASSSSPSLSGTSYSFSSL) shows a compositional bias: low complexity. The span at 663 to 676 (ENTVKTPSSFPSSL) shows a compositional bias: polar residues. Residues 735–745 (LSSDDTSSLSS) show a composition bias toward low complexity. Residues 761–770 (IMDKEETKVS) show a composition bias toward basic and acidic residues. Residues 851 to 899 (KYREWKVMNTLLIQDIYQQQRASPAPDDTDDTPQELKKSPSSPSVENSI) are required for interaction with CYTH2. A Phosphoserine modification is found at S873. The span at 889–899 (SPSSPSVENSI) shows a compositional bias: polar residues.

It belongs to the CNKSR family.

Required for hepatocyte growth factor (HGF)-dependent activation of Arf6 and HGF-stimulated cell migration. The protein is CNK3/IPCEF1 fusion protein (CNK3/IPCEF1) of Homo sapiens (Human).